The sequence spans 370 residues: Queuine tRNA-ribosyltransferase (370 aa).

The Proton acceptor role is filled by aspartate 89. Residues 89–93, aspartate 143, glutamine 187, and glycine 214 each bind substrate; that span reads DSGGF. Positions 245–251 are RNA binding; the sequence is GVGKPEN. Catalysis depends on aspartate 264, which acts as the Nucleophile. The RNA binding; important for wobble base 34 recognition stretch occupies residues 269-273; sequence TRNAR. 4 residues coordinate Zn(2+): cysteine 302, cysteine 304, cysteine 307, and histidine 333.

Belongs to the queuine tRNA-ribosyltransferase family. Homodimer. Within each dimer, one monomer is responsible for RNA recognition and catalysis, while the other monomer binds to the replacement base PreQ1. Zn(2+) serves as cofactor.

It carries out the reaction 7-aminomethyl-7-carbaguanine + guanosine(34) in tRNA = 7-aminomethyl-7-carbaguanosine(34) in tRNA + guanine. It participates in tRNA modification; tRNA-queuosine biosynthesis. Functionally, catalyzes the base-exchange of a guanine (G) residue with the queuine precursor 7-aminomethyl-7-deazaguanine (PreQ1) at position 34 (anticodon wobble position) in tRNAs with GU(N) anticodons (tRNA-Asp, -Asn, -His and -Tyr). Catalysis occurs through a double-displacement mechanism. The nucleophile active site attacks the C1' of nucleotide 34 to detach the guanine base from the RNA, forming a covalent enzyme-RNA intermediate. The proton acceptor active site deprotonates the incoming PreQ1, allowing a nucleophilic attack on the C1' of the ribose to form the product. After dissociation, two additional enzymatic reactions on the tRNA convert PreQ1 to queuine (Q), resulting in the hypermodified nucleoside queuosine (7-(((4,5-cis-dihydroxy-2-cyclopenten-1-yl)amino)methyl)-7-deazaguanosine). The sequence is that of Queuine tRNA-ribosyltransferase from Hamiltonella defensa subsp. Acyrthosiphon pisum (strain 5AT).